Consider the following 481-residue polypeptide: Cysteine--tRNA ligase (481 aa).

A Zn(2+)-binding site is contributed by Cys-27. Residues 29–39 (PTVYNYAHIGN) carry the 'HIGH' region motif. Cys-222, His-247, and Glu-251 together coordinate Zn(2+). Residues 279–283 (KMSKS) carry the 'KMSKS' region motif. Lys-282 contacts ATP.

The protein belongs to the class-I aminoacyl-tRNA synthetase family. In terms of assembly, monomer. It depends on Zn(2+) as a cofactor.

The protein localises to the cytoplasm. The enzyme catalyses tRNA(Cys) + L-cysteine + ATP = L-cysteinyl-tRNA(Cys) + AMP + diphosphate. The protein is Cysteine--tRNA ligase of Borrelia hermsii (strain HS1 / DAH).